The chain runs to 456 residues: MKIEEVKSTTKTQRIASHSHVKGLGLDEAGNAKQSASGLVGQESAREACGIITELIRSKKMAGRAILLAGPPGTGKTALALAMAQELGNKVPFCPMVGSEVYSSEIKKTEVLMENFRRAIGLRIKETKEVYEGEVTELTPCETENPMGGYGKTISHVIIGLKTAKGTKQLKLDPSIYESLQKERVEVGDVIYIEANSGAVKRQGRCDTFATEFDLEAEEYVPLPKGDVHEKKEIIQDVTLHDLDVANARPQGGQDILSMMGQLMKPKKTEITDKLRGEINKVVNKYIDQGVAELVPGVLFIDEVHMLDIECFTYLHRALESSIAPIVVFASNRGNCLIRGTEDISSPHGIPLDLLDRVMIIRTMLYTPQEMKQIIKIRAQTEGLNISEEALSHLGEIGTKTTLRYAVQLLTPASLLARVQGREVVEKEHVEEINELFYDAKSSAKILQDQHTKFMK.

Residues 1-20 form a disordered region; sequence MKIEEVKSTTKTQRIASHSH. 70–77 contributes to the ATP binding site; that stretch reads GPPGTGKT.

The protein belongs to the RuvB family. As to quaternary structure, forms homohexameric rings. Can form a dodecamer with ruvbl2 made of two stacked hexameric rings. Is a component of the RNA polymerase II holoenzyme complex. Component of the chromatin-remodeling Ino80 complex. Component of some MLL1/MLL complex.

The protein resides in the nucleus. It is found in the dynein axonemal particle. The enzyme catalyses ATP + H2O = ADP + phosphate + H(+). In terms of biological role, has single-stranded DNA-stimulated ATPase and ATP-dependent DNA helicase (3' to 5') activity suggesting a role in nuclear processes such as recombination and transcription. Proposed core component of the chromatin remodeling Ino80 complex which exhibits DNA- and nucleosome-activated ATPase activity and catalyzes ATP-dependent nucleosome sliding. May act as a negative regulator of embryonic heart growth. In Danio rerio (Zebrafish), this protein is RuvB-like 1 (ruvbl1).